The primary structure comprises 179 residues: Large ribosomal subunit protein uL5 (179 aa).

This sequence belongs to the universal ribosomal protein uL5 family. As to quaternary structure, part of the 50S ribosomal subunit; part of the 5S rRNA/L5/L18/L25 subcomplex. Contacts the 5S rRNA and the P site tRNA. Forms a bridge to the 30S subunit in the 70S ribosome.

In terms of biological role, this is one of the proteins that bind and probably mediate the attachment of the 5S RNA into the large ribosomal subunit, where it forms part of the central protuberance. In the 70S ribosome it contacts protein S13 of the 30S subunit (bridge B1b), connecting the 2 subunits; this bridge is implicated in subunit movement. Contacts the P site tRNA; the 5S rRNA and some of its associated proteins might help stabilize positioning of ribosome-bound tRNAs. This Macrococcus caseolyticus (strain JCSC5402) (Macrococcoides caseolyticum) protein is Large ribosomal subunit protein uL5.